Here is a 164-residue protein sequence, read N- to C-terminus: Protein-export protein SecB (164 aa).

Belongs to the SecB family. Homotetramer, a dimer of dimers. One homotetramer interacts with 1 SecA dimer.

Its subcellular location is the cytoplasm. In terms of biological role, one of the proteins required for the normal export of preproteins out of the cell cytoplasm. It is a molecular chaperone that binds to a subset of precursor proteins, maintaining them in a translocation-competent state. It also specifically binds to its receptor SecA. This chain is Protein-export protein SecB, found in Burkholderia orbicola (strain MC0-3).